The sequence spans 550 residues: Rhodopsin kinase grk7-b (550 aa).

The segment at 22–45 is disordered; it reads SSEGDAKELQKRRKSLSLPPPDVS. A Phosphoserine modification is found at S36. One can recognise an RGS domain in the interval 57 to 174; the sequence is YQSICVEQPI…QNSPFYDRFL (118 aa). The Protein kinase domain occupies 189 to 451; sequence FYEFRILGKG…DDDPRKHAFF (263 aa). Residues 195–203 and K218 contribute to the ATP site; that span reads LGKGGFGEV. Residue D314 is the Proton acceptor of the active site. Residues 452–517 form the AGC-kinase C-terminal domain; sequence KSINFQRLEA…GAVPISWQKE (66 aa). A Phosphoserine modification is found at S487. The interval 531-550 is disordered; sequence SREVTGGGNSGEKSGVCSIL. At C547 the chain carries Cysteine methyl ester. C547 carries S-geranylgeranyl cysteine lipidation. Positions 548–550 are cleaved as a propeptide — removed in mature form; it reads SIL.

The protein belongs to the protein kinase superfamily. AGC Ser/Thr protein kinase family. GPRK subfamily. Autophosphorylated in vitro at Ser-487. Phosphorylation at Ser-36 is regulated by light and activated by cAMP. In terms of tissue distribution, retina, cones.

Its subcellular location is the membrane. It catalyses the reaction L-threonyl-[rhodopsin] + ATP = O-phospho-L-threonyl-[rhodopsin] + ADP + H(+). The enzyme catalyses L-seryl-[rhodopsin] + ATP = O-phospho-L-seryl-[rhodopsin] + ADP + H(+). Its function is as follows. Retina-specific kinase involved in the shutoff of the photoresponse and adaptation to changing light conditions via cone opsin phosphorylation, including rhodopsin (RHO). The protein is Rhodopsin kinase grk7-b (grk7-b) of Xenopus laevis (African clawed frog).